The following is a 139-amino-acid chain: Peptide methionine sulfoxide reductase MsrB (139 aa).

The region spanning 14-137 (DEEWRRELTP…NSISLDFQPE (124 aa)) is the MsrB domain. Positions 53, 56, 102, and 105 each coordinate Zn(2+). C126 serves as the catalytic Nucleophile.

This sequence belongs to the MsrB Met sulfoxide reductase family. Zn(2+) is required as a cofactor.

It catalyses the reaction L-methionyl-[protein] + [thioredoxin]-disulfide + H2O = L-methionyl-(R)-S-oxide-[protein] + [thioredoxin]-dithiol. The protein is Peptide methionine sulfoxide reductase MsrB of Leifsonia xyli subsp. xyli (strain CTCB07).